A 159-amino-acid polypeptide reads, in one-letter code: Cytochrome c-type biogenesis protein CcmE (159 aa).

At 1 to 8 (MNPRRKKR) the chain is on the cytoplasmic side. A helical; Signal-anchor for type II membrane protein transmembrane segment spans residues 9–29 (LLVIVAVLFGIGASIGLVLYA). At 30-159 (LQENINLFYT…KPKYNLDSGN (130 aa)) the chain is on the periplasmic side. Heme contacts are provided by His130 and Tyr134.

The protein belongs to the CcmE/CycJ family.

It localises to the cell inner membrane. In terms of biological role, heme chaperone required for the biogenesis of c-type cytochromes. Transiently binds heme delivered by CcmC and transfers the heme to apo-cytochromes in a process facilitated by CcmF and CcmH. This is Cytochrome c-type biogenesis protein CcmE from Pseudoalteromonas translucida (strain TAC 125).